The sequence spans 905 residues: Phosphatidylethanolamine N-methyltransferase (905 aa).

Polar residues-rich tracts occupy residues 1 to 22 and 40 to 58; these read MTNQ…STSV and DSNG…SSLN. The disordered stretch occupies residues 1–73; that stretch reads MTNQIPSASS…SEPERYGCTP (73 aa). At 1–104 the chain is on the lumenal side; that stretch reads MTNQIPSASS…DPRFSKTPWD (104 aa). Residues 105 to 125 traverse the membrane as a helical segment; sequence WIVISSILAQVLLFFMTTGAV. Topologically, residues 126–128 are cytoplasmic; the sequence is RRY. The chain crosses the membrane as a helical span at residues 129–149; that stretch reads SMMLCFFFWRISYDAGIGFLL. At 150–209 the chain is on the lumenal side; the sequence is HMQSNHRKVVTWISDFGFFDKENHPKLYDLTKKQLISKMDSSYNYDTSPLEFNSWLVFRH. The helical transmembrane segment at 210–230 threads the bilayer; sequence FVDLILMCDFCSYILMGLAWT. The Cytoplasmic segment spans residues 231–236; that stretch reads CWPKVN. A helical transmembrane segment spans residues 237-257; the sequence is IILQFLRIFGGIALIVFNYWV. Residues 258 to 268 lie on the Lumenal side of the membrane; that stretch reads KMDAHRVVRDY. A helical transmembrane segment spans residues 269 to 289; sequence AWYWGDFFFLLRSSLVFNGVF. Topologically, residues 290 to 313 are cytoplasmic; sequence ELAPHPMYSVGYAGYYGMSLLTGS. The chain crosses the membrane as a helical span at residues 314–334; that stretch reads YAVLFASILAHAAQFGFLLFV. Over 335 to 379 the chain is Lumenal; that stretch reads ENPHIERTYGTDINHARLSPRGEDNEFELPPEHDLVGFVNFDFTR. S353 is modified (phosphoserine). Residues 380–400 traverse the membrane as a helical segment; that stretch reads ISDVALLIIALYSIFIILLSS. Residues 401-408 lie on the Cytoplasmic side of the membrane; sequence NSHYSQFW. The helical transmembrane segment at 409–429 threads the bilayer; sequence AIFQAFVWRFLHSIIHAFILF. Topologically, residues 430–456 are lumenal; that stretch reads YQSKSKAWTKHFIRNGESAAYAWSQWK. The chain crosses the membrane as a helical span at residues 457–479; that stretch reads GLYNLTLNMSYISFVMAAWKLYH. At 480–493 the chain is on the cytoplasmic side; the sequence is LPSNWTYGLVSLRH. The chain crosses the membrane as a helical span at residues 494–514; the sequence is ALGFGLIALHIYTSVSIYEDL. The Lumenal segment spans residues 515 to 552; that stretch reads GQYGWFYGDFFLPSRSPKLVYQGIYRYVNNPERFLGCS. The chain crosses the membrane as a helical span at residues 553–573; that stretch reads AYWGLALISSSAWIFLIAILA. The Cytoplasmic portion of the chain corresponds to 574 to 905; the sequence is QLSNLAIIRL…FDGPSGAKDD (332 aa).

It belongs to the class VI-like SAM-binding methyltransferase superfamily. CHO2 family.

It is found in the endoplasmic reticulum membrane. The enzyme catalyses a 1,2-diacyl-sn-glycero-3-phosphoethanolamine + S-adenosyl-L-methionine = a 1,2-diacyl-sn-glycero-3-phospho-N-methylethanolamine + S-adenosyl-L-homocysteine + H(+). It functions in the pathway phospholipid metabolism; phosphatidylcholine biosynthesis. Catalyzes the first step of the methylation pathway of phosphatidylcholine biosynthesis, the SAM-dependent methylation of phosphatidylethanolamine (PE) to phosphatidylmonomethylethanolamine (PMME). The sequence is that of Phosphatidylethanolamine N-methyltransferase from Schizosaccharomyces pombe (strain 972 / ATCC 24843) (Fission yeast).